Here is a 130-residue protein sequence, read N- to C-terminus: MPNNFRLAKVSSLLKKEITLILQNDLENDLIRDYFVNISKIDLSGDLQHCKIYITSTAKETVRKEIVANLNTAKSFIRNNLGKRIEMRRVPEIIFKEDIVLDKGLSVLKLLDELKNKHQDKNYEDKDANS.

It belongs to the RbfA family. As to quaternary structure, monomer. Binds 30S ribosomal subunits, but not 50S ribosomal subunits or 70S ribosomes.

It localises to the cytoplasm. Functionally, one of several proteins that assist in the late maturation steps of the functional core of the 30S ribosomal subunit. Associates with free 30S ribosomal subunits (but not with 30S subunits that are part of 70S ribosomes or polysomes). Required for efficient processing of 16S rRNA. May interact with the 5'-terminal helix region of 16S rRNA. This is Ribosome-binding factor A from Prochlorococcus marinus (strain MIT 9312).